The primary structure comprises 408 residues: S100P-binding protein (408 aa).

Disordered stretches follow at residues 1–111 (MMCS…AETP), 162–234 (KDET…SENP), and 271–291 (VSTS…MKGH). Positions 28–59 (SLDEDGLDDSLLELSEGEEDDGDVNYTEEEID) are enriched in acidic residues. Basic and acidic residues-rich tracts occupy residues 77–86 (DGGHVEKGER) and 162–185 (KDET…REDG). Ser-187 carries the post-translational modification Phosphoserine. Positions 188-234 (PNESKLCTESEGISPNNSAWNGPQLSSSNNNFQQTVSDKNMPDSENP) are enriched in polar residues. Residues 280–291 (VLNKDSGKMKGH) are compositionally biased toward basic and acidic residues.

In terms of assembly, interacts with S100P. Expressed in brain, spleen, and lung. Not detected in pancreas or liver. In pancreas, expressed predominantly in islet cells and to a lesser extent in acinar cells, but not expressed in ductal cells. Up-regulated in various pancreatic ductal adenocarcinomas and pancreatic intraepithelial neoplasias. Detected in pancreatic ductal adenocarcinoma cells (at protein level). Not detected in non-neoplastic ductal epithelium (at protein level).

It localises to the nucleus. The sequence is that of S100P-binding protein from Homo sapiens (Human).